Here is a 392-residue protein sequence, read N- to C-terminus: MHEVKQPRRIMVVTGEASGDLHGAHLIEAAGKVDPGLSFFGVGGACMAKAGCEILIPGEDLAVMGLVEVLGHFPTIWRAFRKLKKILHGPQRPDALVLIDFAEFNLLLAAQAKKAGVPVLYYVSPQVWAWRRGRVRRIASVVDRLAAIFPFEPELYQGLDIDVEYVGHPLLDEFAITCERDAFLRRLGLDPARQVIGLFPGSRKNELKYIAETILQSAVKLREKHPDAQFLLPVASSFRRQDIEALVAPYGLPVTVVDEPIYDVINACDAVISVSGTVTLQVALVGTPMAIVYKMAPLSFAIGKRLIRVPHIGLANIVAGRGVVKEFIQEDATPAMISREIDAILTDAEYNRSIRGGLATVQQRMGEGGCAARVARMVSELCREIPGKERMV.

This sequence belongs to the LpxB family.

It catalyses the reaction a lipid X + a UDP-2-N,3-O-bis[(3R)-3-hydroxyacyl]-alpha-D-glucosamine = a lipid A disaccharide + UDP + H(+). It participates in bacterial outer membrane biogenesis; LPS lipid A biosynthesis. Its function is as follows. Condensation of UDP-2,3-diacylglucosamine and 2,3-diacylglucosamine-1-phosphate to form lipid A disaccharide, a precursor of lipid A, a phosphorylated glycolipid that anchors the lipopolysaccharide to the outer membrane of the cell. This Syntrophotalea carbinolica (strain DSM 2380 / NBRC 103641 / GraBd1) (Pelobacter carbinolicus) protein is Lipid-A-disaccharide synthase.